We begin with the raw amino-acid sequence, 226 residues long: V-type proton ATPase subunit E (226 aa).

This sequence belongs to the V-ATPase E subunit family. V-ATPase is a heteromultimeric enzyme made up of two complexes: the ATP-hydrolytic V1 complex and the proton translocation V0 complex. The V1 complex consists of three catalytic AB heterodimers that form a heterohexamer, three peripheral stalks each consisting of EG heterodimers, one central rotor including subunits D and F, and the regulatory subunits C and H. The proton translocation complex V0 consists of the proton transport subunit a, a ring of proteolipid subunits c9c'', rotary subunit d, subunits e and f, and the accessory subunits VhaAC45 and ATP6AP2.

Its function is as follows. Subunit of the V1 complex of vacuolar(H+)-ATPase (V-ATPase), a multisubunit enzyme composed of a peripheral complex (V1) that hydrolyzes ATP and a membrane integral complex (V0) that translocates protons. V-ATPase is responsible for acidifying and maintaining the pH of intracellular compartments and in some cell types, is targeted to the plasma membrane, where it is responsible for acidifying the extracellular environment. The protein is V-type proton ATPase subunit E (Vha26) of Drosophila melanogaster (Fruit fly).